We begin with the raw amino-acid sequence, 1024 residues long: Error-prone DNA polymerase (1024 aa).

The protein belongs to the DNA polymerase type-C family. DnaE2 subfamily.

The protein resides in the cytoplasm. The enzyme catalyses DNA(n) + a 2'-deoxyribonucleoside 5'-triphosphate = DNA(n+1) + diphosphate. Functionally, DNA polymerase involved in damage-induced mutagenesis and translesion synthesis (TLS). It is not the major replicative DNA polymerase. The chain is Error-prone DNA polymerase from Vibrio vulnificus (strain CMCP6).